A 318-amino-acid chain; its full sequence is Homoserine kinase (318 aa).

97–107 (PIGSGLGSSAC) is an ATP binding site.

It belongs to the GHMP kinase family. Homoserine kinase subfamily.

It localises to the cytoplasm. It catalyses the reaction L-homoserine + ATP = O-phospho-L-homoserine + ADP + H(+). It participates in amino-acid biosynthesis; L-threonine biosynthesis; L-threonine from L-aspartate: step 4/5. In terms of biological role, catalyzes the ATP-dependent phosphorylation of L-homoserine to L-homoserine phosphate. This Vibrio parahaemolyticus serotype O3:K6 (strain RIMD 2210633) protein is Homoserine kinase.